The chain runs to 830 residues: FYN-binding protein 1 (830 aa).

The interval 1 to 501 (MDGKTDVKSL…REKKEQELRK (501 aa)) is disordered. An N6-acetyllysine modification is found at lysine 13. The span at 15 to 55 (NTGSNPTEEVSTSSRPFKVAGQNSPSGIQSKKNLFDNQGNA) shows a compositional bias: polar residues. Residues serine 38 and serine 56 each carry the phosphoserine modification. The span at 79 to 89 (TYEEKSEKEPK) shows a compositional bias: basic and acidic residues. At serine 233 the chain carries Phosphoserine. Composition is skewed to basic and acidic residues over residues 248–259 (PAKEDPEDKDHG) and 284–296 (NSEE…KTDI). Serine 329 bears the Phosphoserine mark. The span at 330 to 339 (QEKEGDKDSA) shows a compositional bias: basic and acidic residues. 2 stretches are compositionally biased toward pro residues: residues 344–362 (KPLP…PSRP) and 391–407 (LPPP…PLPA). The segment at 347 to 447 (PPLSVLGPPP…QDGVMHSDGT (101 aa)) is interaction with SKAP1. Acidic residues predominate over residues 450-464 (LEEEQESDGEMYEDI). Position 456 is a phosphoserine (serine 456). The short motif at 461-464 (YEDI) is the SH2-binding element. Basic and acidic residues predominate over residues 465–500 (ESSKERDKKREKEEKKRLELERKEQKEREKKEQELR). Residues 465–502 (ESSKERDKKREKEEKKRLELERKEQKEREKKEQELRKK) are a coiled coil. Residues 479–486 (KKRLELER) carry the Nuclear localization signal motif. In terms of domain architecture, SH3 1 spans 510 to 571 (QVIHHAKACC…KTTAVKIDYD (62 aa)). Position 570 is a phosphotyrosine (tyrosine 570). At serine 572 the chain carries Phosphoserine. Residues 595–598 (YDDV) carry the SH2-binding; to LCP2 motif. Disordered stretches follow at residues 601 to 646 (QDAP…DEKT) and 660 to 739 (KDER…EKEE). Acidic residues predominate over residues 621-636 (ADDDIYDGIEEEDADD). The SH2-binding; to FYN signature appears at 626–629 (YDGI). Basic and acidic residues predominate over residues 660-675 (KDERKKSIREKPKVSE). Positions 693-703 (VGEEVYDDVDA) are enriched in acidic residues. Position 698 is a phosphotyrosine (tyrosine 698). The span at 722–739 (TKAEEKDPKKLKKQEKEE) shows a compositional bias: basic and acidic residues. The short motif at 732-739 (LKKQEKEE) is the Nuclear localization signal element. Residues 747 to 815 (KYDGEIRVLY…LRSYLVDNDG (69 aa)) form the SH3 2 domain.

Part of a complex consisting of SKAP2, FYB1 and PTPNS1. Part of a complex consisting of SKAP2, FYB1 and LILRB3. Part of a complex consisting of SKAP1, FYB1 and CLNK. Interacts with CLNK (via its SH2 domain) and FYN; this interaction allows SKAP1 and FYB1 to recruit FYN to the complex, thus promoting the phosphorylation of CLNK by FYN. Interacts with FYN. Interacts with LCP2. Interacts with SKAP1. Interacts with SKAP2. Interacts with FASLG. Interacts with EVL. Interacts with TMEM47. Interacts with LCK. Post-translationally, T-cell receptor ligation leads to increased tyrosine phosphorylation.

The protein resides in the cytoplasm. It localises to the nucleus. It is found in the cell junction. Functionally, acts as an adapter protein of the FYN and LCP2 signaling cascades in T-cells. May play a role in linking T-cell signaling to remodeling of the actin cytoskeleton. Modulates the expression of IL2. Involved in platelet activation. Prevents the degradation of SKAP1 and SKAP2. May be involved in high affinity immunoglobulin epsilon receptor signaling in mast cells. The polypeptide is FYN-binding protein 1 (Rattus norvegicus (Rat)).